Reading from the N-terminus, the 89-residue chain is Large ribosomal subunit protein bL27 (89 aa).

This sequence belongs to the bacterial ribosomal protein bL27 family.

This chain is Large ribosomal subunit protein bL27, found in Afipia carboxidovorans (strain ATCC 49405 / DSM 1227 / KCTC 32145 / OM5) (Oligotropha carboxidovorans).